Reading from the N-terminus, the 270-residue chain is Pre-mRNA-splicing factor CWC23 (270 aa).

A J domain is found at 12–84; sequence DLYRILHIHV…EHKKEYDIWY (73 aa).

It belongs to the DnaJ family. Associated with the spliceosome.

The protein resides in the cytoplasm. It is found in the nucleus. Functionally, involved in pre-mRNA splicing. May be involved in endoplasmic reticulum-associated protein degradation (ERAD) and required for growth at low and high temperatures. This is Pre-mRNA-splicing factor CWC23 (CWC23) from Kluyveromyces lactis (strain ATCC 8585 / CBS 2359 / DSM 70799 / NBRC 1267 / NRRL Y-1140 / WM37) (Yeast).